Reading from the N-terminus, the 427-residue chain is Trigger factor (427 aa).

One can recognise a PPIase FKBP-type domain in the interval 163 to 248; the sequence is GDTVVIDFVG…IHEVKAKEVP (86 aa).

This sequence belongs to the FKBP-type PPIase family. Tig subfamily.

Its subcellular location is the cytoplasm. The enzyme catalyses [protein]-peptidylproline (omega=180) = [protein]-peptidylproline (omega=0). Involved in protein export. Acts as a chaperone by maintaining the newly synthesized protein in an open conformation. Functions as a peptidyl-prolyl cis-trans isomerase. This is Trigger factor from Streptococcus pneumoniae (strain 70585).